Here is a 762-residue protein sequence, read N- to C-terminus: Protein PHTF1 (762 aa).

One can recognise a PHTF domain in the interval 6–150; the sequence is RDAISWYQKK…VHCQIVSTQI (145 aa). 3 helical membrane-spanning segments follow: residues 77 to 97, 99 to 119, and 121 to 141; these read GLVR…VTSL, IFVW…LYLM, and PIVN…MGTV. The segment at 152 to 184 is disordered; the sequence is RPSGNNGNRRRRKLRKTVNGDGSRENGNNSSDK. N-linked (GlcNAc...) asparagine glycosylation is found at Asn-179 and Asn-180. Residues Ser-272, Ser-276, Ser-277, Ser-334, and Ser-336 each carry the phosphoserine modification. 2 disordered regions span residues 344–380 and 393–415; these read SAAF…ETED and RSSV…TKRD. Over residues 348–361 the composition is skewed to low complexity; that stretch reads SQGSRSGVSGGSRS. A glycan (N-linked (GlcNAc...) asparagine) is linked at Asn-363. The segment covering 365–376 has biased composition (basic and acidic residues); it reads SRRDSESTRHDS. Residue Asn-431 is glycosylated (N-linked (GlcNAc...) asparagine). 4 consecutive transmembrane segments (helical) span residues 473–493, 512–532, 611–631, and 645–665; these read GVGY…FPFL, EILT…LSII, VVVS…CAQV, and WEFL…ASLG. N-linked (GlcNAc...) asparagine glycosylation is found at Asn-674 and Asn-733. A helical transmembrane segment spans residues 737–757; the sequence is VVILSAVSGVISDLLGFNIRL.

In terms of assembly, interacts with FEM1B. As to expression, widely expressed with highest levels in testis.

The protein resides in the endoplasmic reticulum membrane. The protein localises to the golgi apparatus. It is found in the cis-Golgi network membrane. This Homo sapiens (Human) protein is Protein PHTF1.